We begin with the raw amino-acid sequence, 273 residues long: Trypsin-6 (273 aa).

The first 22 residues, 1–22 (MLSKFTAILLAVHIALFACALT), serve as a signal peptide directing secretion. A propeptide spans 23–46 (QAEKRHKLTRPAFHPNAPYLAGKR) (activation peptide). Positions 47–272 (IVGGFVIDIS…VRDWIRETSG (226 aa)) constitute a Peptidase S1 domain. A disulfide bond links Cys-72 and Cys-88. Catalysis depends on charge relay system residues His-87 and Asp-132. Intrachain disulfides connect Cys-197–Cys-213 and Cys-224–Cys-248. Ser-228 (charge relay system) is an active-site residue.

It belongs to the peptidase S1 family. In terms of tissue distribution, expressed in the midgut. Expression levels drop a few hours after blood feeding and pick up again 28 hours later.

The protein localises to the secreted. The enzyme catalyses Preferential cleavage: Arg-|-Xaa, Lys-|-Xaa.. In terms of biological role, constitutive trypsin that is expressed 2 days after emergence, coinciding with host seeking behavior of the female. The protein is Trypsin-6 (TRYP6) of Anopheles gambiae (African malaria mosquito).